Consider the following 164-residue polypeptide: Succinate dehydrogenase assembly factor 3, mitochondrial (164 aa).

The transit peptide at 1–51 directs the protein to the mitochondrion; sequence MRPTLLRLANASGPLPLSVSQASVQLIPPIPLYRRLLRAHRLLPVDMRYMG. Over residues 136–145 the composition is skewed to basic and acidic residues; that stretch reads KSPEQIEREA. The interval 136-164 is disordered; sequence KSPEQIEREANSAGVSPVNPNDPTTAGNS. Residues 153 to 164 are compositionally biased toward polar residues; the sequence is VNPNDPTTAGNS.

The protein belongs to the complex I LYR family. SDHAF3 subfamily. In terms of assembly, interacts with the iron-sulfur protein subunit within the SDH catalytic dimer.

The protein localises to the mitochondrion matrix. Its function is as follows. Plays an essential role in the assembly of succinate dehydrogenase (SDH), an enzyme complex (also referred to as respiratory complex II) that is a component of both the tricarboxylic acid (TCA) cycle and the mitochondrial electron transport chain, and which couples the oxidation of succinate to fumarate with the reduction of ubiquinone (coenzyme Q) to ubiquinol. Promotes maturation of the iron-sulfur protein subunit of the SDH catalytic dimer, protecting it from the deleterious effects of oxidants. May act together with SDHAF1. This is Succinate dehydrogenase assembly factor 3, mitochondrial from Cryptococcus neoformans var. neoformans serotype D (strain B-3501A) (Filobasidiella neoformans).